The following is a 460-amino-acid chain: Biphenyl 2,3-dioxygenase subunit alpha (460 aa).

The region spanning 56–165 (WLLMGHETQI…VETYKGLIFA (110 aa)) is the Rieske domain. 4 residues coordinate [2Fe-2S] cluster: Cys98, His100, Cys118, and His121. 217 to 230 (QFCSDMYHAGTTSH) is a binding site for substrate. His224, His230, and Asp378 together coordinate Fe cation.

Belongs to the bacterial ring-hydroxylating dioxygenase alpha subunit family. In terms of assembly, heterohexamer consisting of three BphA1 subunits and three BphA2 subunits. The multicomponent biphenyl dioxygenase system is composed of a ferredoxin reductase (BphA4), a ferredoxin (BphA3), and a terminal oxygenase (BphA1A2). The cofactor is [2Fe-2S] cluster. It depends on Fe cation as a cofactor.

It catalyses the reaction biphenyl + NADH + O2 + H(+) = (2R,3S)-3-phenylcyclohexa-3,5-diene-1,2-diol + NAD(+). It functions in the pathway xenobiotic degradation; biphenyl degradation; 2-hydroxy-2,4-pentadienoate and benzoate from biphenyl: step 1/4. Functionally, part of the oxygenase component of the biphenyl dioxygenase system that catalyzes the stereospecific dihydroxylation of the aromatic ring of biphenyl, yielding a dihydrodiol compound. Is essential for biphenyl degradation and growth of Rhodococcus sp. strain RHA1 on biphenyl as the sole source of carbon and energy. Can also use naphtalene and 4-chlorobiphenyl (4-CB) as substrates, as well as some polychlorinated biphenyls (PCB) such as 2,2'-dichlorobiphenyl, 2,3-dichlorobiphenyl and 2,5,2'-trichlorobiphenyl. Exhibits weak activity toward dibenzofuran and dibenzo-p-dioxin. Electrons are transferred from NADH to the [2Fe-2S] cluster in BphA1 via FAD of BphA4 and [2Fe-2S] cluster of BphA3. The chain is Biphenyl 2,3-dioxygenase subunit alpha from Rhodococcus jostii (strain RHA1).